Here is a 463-residue protein sequence, read N- to C-terminus: General transcription factor IIH subunit 4 (463 aa).

The protein belongs to the TFB2 family. In terms of assembly, component of the 7-subunit TFIIH core complex composed of XPB/ERCC3, XPD/ERCC2, GTF2H1, GTF2H2, GTF2H3, GTF2H4 and GTF2H5, which is active in NER. The core complex associates with the 3-subunit CDK-activating kinase (CAK) module composed of CCNH/cyclin H, CDK7 and MNAT1 to form the 10-subunit holoenzyme (holo-TFIIH) active in transcription. Part of TBP-based Pol II pre-initiation complex (PIC), in which Pol II core assembles with general transcription factors and other specific initiation factors including GTF2E1, GTF2E2, GTF2F1, GTF2F2, TCEA1, ERCC2, ERCC3, GTF2H2, GTF2H3, GTF2H4, GTF2H5, GTF2A1, GTF2A2, GTF2B and TBP; this large multi-subunit PIC complex mediates DNA unwinding and targets Pol II core to the transcription start site where the first phosphodiester bond forms.

The protein resides in the nucleus. In terms of biological role, component of the general transcription and DNA repair factor IIH (TFIIH) core complex, which is involved in general and transcription-coupled nucleotide excision repair (NER) of damaged DNA and, when complexed to CAK, in RNA transcription by RNA polymerase II. In NER, TFIIH acts by opening DNA around the lesion to allow the excision of the damaged oligonucleotide and its replacement by a new DNA fragment. In transcription, TFIIH has an essential role in transcription initiation. When the pre-initiation complex (PIC) has been established, TFIIH is required for promoter opening and promoter escape. Phosphorylation of the C-terminal tail (CTD) of the largest subunit of RNA polymerase II by the kinase module CAK controls the initiation of transcription. This Mus musculus (Mouse) protein is General transcription factor IIH subunit 4 (Gtf2h4).